The following is a 312-amino-acid chain: D-alanine--D-alanine ligase (312 aa).

The region spanning 102-307 (KKIFKMEGIP…FPELTDRLIK (206 aa)) is the ATP-grasp domain. ATP is bound at residue 136–191 (IKEVGVPAVVKANTQGSTIGITFVHVKEKMAEAIESALKYDQDVLVEQFVAGTEVT). 3 residues coordinate Mg(2+): D262, E274, and N276.

It belongs to the D-alanine--D-alanine ligase family. Mg(2+) serves as cofactor. Requires Mn(2+) as cofactor.

It localises to the cytoplasm. It carries out the reaction 2 D-alanine + ATP = D-alanyl-D-alanine + ADP + phosphate + H(+). It functions in the pathway cell wall biogenesis; peptidoglycan biosynthesis. Functionally, cell wall formation. This chain is D-alanine--D-alanine ligase, found in Desulforamulus reducens (strain ATCC BAA-1160 / DSM 100696 / MI-1) (Desulfotomaculum reducens).